Reading from the N-terminus, the 245-residue chain is tRNA (guanine-N(1)-)-methyltransferase (245 aa).

S-adenosyl-L-methionine-binding positions include G113 and 133 to 138; that span reads IGDYVL.

The protein belongs to the RNA methyltransferase TrmD family. Homodimer.

Its subcellular location is the cytoplasm. It catalyses the reaction guanosine(37) in tRNA + S-adenosyl-L-methionine = N(1)-methylguanosine(37) in tRNA + S-adenosyl-L-homocysteine + H(+). Functionally, specifically methylates guanosine-37 in various tRNAs. The sequence is that of tRNA (guanine-N(1)-)-methyltransferase from Anoxybacillus flavithermus (strain DSM 21510 / WK1).